Consider the following 950-residue polypeptide: Leucine--tRNA ligase (950 aa).

Positions 42-52 match the 'HIGH' region motif; sequence PYLNGNLHAGH. Residues 629-633 carry the 'KMSKS' region motif; sequence KMSKS. Residue Lys632 coordinates ATP. Residues 928 to 950 are disordered; the sequence is NPPYDPKGRAQNAEPGRPAIYIE.

It belongs to the class-I aminoacyl-tRNA synthetase family.

The protein resides in the cytoplasm. It catalyses the reaction tRNA(Leu) + L-leucine + ATP = L-leucyl-tRNA(Leu) + AMP + diphosphate. The polypeptide is Leucine--tRNA ligase (Methanothrix thermoacetophila (strain DSM 6194 / JCM 14653 / NBRC 101360 / PT) (Methanosaeta thermophila)).